A 571-amino-acid chain; its full sequence is Proline--tRNA ligase (571 aa).

The protein belongs to the class-II aminoacyl-tRNA synthetase family. ProS type 1 subfamily. In terms of assembly, homodimer.

Its subcellular location is the cytoplasm. The enzyme catalyses tRNA(Pro) + L-proline + ATP = L-prolyl-tRNA(Pro) + AMP + diphosphate. Its function is as follows. Catalyzes the attachment of proline to tRNA(Pro) in a two-step reaction: proline is first activated by ATP to form Pro-AMP and then transferred to the acceptor end of tRNA(Pro). As ProRS can inadvertently accommodate and process non-cognate amino acids such as alanine and cysteine, to avoid such errors it has two additional distinct editing activities against alanine. One activity is designated as 'pretransfer' editing and involves the tRNA(Pro)-independent hydrolysis of activated Ala-AMP. The other activity is designated 'posttransfer' editing and involves deacylation of mischarged Ala-tRNA(Pro). The misacylated Cys-tRNA(Pro) is not edited by ProRS. The polypeptide is Proline--tRNA ligase (Pseudomonas fluorescens (strain Pf0-1)).